The following is a 354-amino-acid chain: UPF0283 membrane protein plu2581 (354 aa).

3 consecutive transmembrane segments (helical) span residues 71–91 (MVYGSLMLLGLSAVAQFVQWI), 101–121 (SALGVAAAGSMIVFAGIGSLV), and 214–234 (ESALMIAVSPLAIVDMAFIAW).

It belongs to the UPF0283 family.

The protein localises to the cell inner membrane. This is UPF0283 membrane protein plu2581 from Photorhabdus laumondii subsp. laumondii (strain DSM 15139 / CIP 105565 / TT01) (Photorhabdus luminescens subsp. laumondii).